The following is a 245-amino-acid chain: tRNA pseudouridine synthase A (245 aa).

Aspartate 52 (nucleophile) is an active-site residue. Residue tyrosine 111 participates in substrate binding.

It belongs to the tRNA pseudouridine synthase TruA family. Homodimer.

It catalyses the reaction uridine(38/39/40) in tRNA = pseudouridine(38/39/40) in tRNA. In terms of biological role, formation of pseudouridine at positions 38, 39 and 40 in the anticodon stem and loop of transfer RNAs. The chain is tRNA pseudouridine synthase A from Zymomonas mobilis subsp. mobilis (strain ATCC 31821 / ZM4 / CP4).